The following is a 248-amino-acid chain: 3-deoxy-manno-octulosonate cytidylyltransferase (248 aa).

This sequence belongs to the KdsB family.

The protein localises to the cytoplasm. The catalysed reaction is 3-deoxy-alpha-D-manno-oct-2-ulosonate + CTP = CMP-3-deoxy-beta-D-manno-octulosonate + diphosphate. It functions in the pathway nucleotide-sugar biosynthesis; CMP-3-deoxy-D-manno-octulosonate biosynthesis; CMP-3-deoxy-D-manno-octulosonate from 3-deoxy-D-manno-octulosonate and CTP: step 1/1. It participates in bacterial outer membrane biogenesis; lipopolysaccharide biosynthesis. In terms of biological role, activates KDO (a required 8-carbon sugar) for incorporation into bacterial lipopolysaccharide in Gram-negative bacteria. In Salmonella typhi, this protein is 3-deoxy-manno-octulosonate cytidylyltransferase.